A 343-amino-acid chain; its full sequence is NADH-quinone oxidoreductase subunit H (343 aa).

8 helical membrane passes run 5-25 (FIIE…LMAM), 76-96 (FLFV…SAVI), 119-139 (ALLY…IGGW), 158-178 (VSYE…TGTL), 190-210 (MNWN…CAFA), 243-263 (LFAE…LFFG), 284-304 (ILGF…YMWV), and 323-343 (ILIP…LLFK).

Belongs to the complex I subunit 1 family. NDH-1 is composed of 14 different subunits. Subunits NuoA, H, J, K, L, M, N constitute the membrane sector of the complex.

The protein resides in the cell inner membrane. The enzyme catalyses a quinone + NADH + 5 H(+)(in) = a quinol + NAD(+) + 4 H(+)(out). NDH-1 shuttles electrons from NADH, via FMN and iron-sulfur (Fe-S) centers, to quinones in the respiratory chain. The immediate electron acceptor for the enzyme in this species is believed to be ubiquinone. Couples the redox reaction to proton translocation (for every two electrons transferred, four hydrogen ions are translocated across the cytoplasmic membrane), and thus conserves the redox energy in a proton gradient. This subunit may bind ubiquinone. This chain is NADH-quinone oxidoreductase subunit H, found in Flavobacterium psychrophilum (strain ATCC 49511 / DSM 21280 / CIP 103535 / JIP02/86).